A 213-amino-acid polypeptide reads, in one-letter code: ATP phosphoribosyltransferase (213 aa).

The protein belongs to the ATP phosphoribosyltransferase family. Short subfamily. As to quaternary structure, heteromultimer composed of HisG and HisZ subunits.

Its subcellular location is the cytoplasm. The enzyme catalyses 1-(5-phospho-beta-D-ribosyl)-ATP + diphosphate = 5-phospho-alpha-D-ribose 1-diphosphate + ATP. It functions in the pathway amino-acid biosynthesis; L-histidine biosynthesis; L-histidine from 5-phospho-alpha-D-ribose 1-diphosphate: step 1/9. Functionally, catalyzes the condensation of ATP and 5-phosphoribose 1-diphosphate to form N'-(5'-phosphoribosyl)-ATP (PR-ATP). Has a crucial role in the pathway because the rate of histidine biosynthesis seems to be controlled primarily by regulation of HisG enzymatic activity. The chain is ATP phosphoribosyltransferase from Nitrosococcus oceani (strain ATCC 19707 / BCRC 17464 / JCM 30415 / NCIMB 11848 / C-107).